The primary structure comprises 172 residues: Protein-export protein SecB (172 aa).

The protein belongs to the SecB family. In terms of assembly, homotetramer, a dimer of dimers. One homotetramer interacts with 1 SecA dimer.

The protein localises to the cytoplasm. Its function is as follows. One of the proteins required for the normal export of preproteins out of the cell cytoplasm. It is a molecular chaperone that binds to a subset of precursor proteins, maintaining them in a translocation-competent state. It also specifically binds to its receptor SecA. In Dinoroseobacter shibae (strain DSM 16493 / NCIMB 14021 / DFL 12), this protein is Protein-export protein SecB.